Consider the following 245-residue polypeptide: Thiopurine S-methyltransferase (245 aa).

S-adenosyl-L-methionine is bound at residue 29-40 (WQEKWVSRRIGF). A substrate-binding site is contributed by phenylalanine 40. Lysine 58 is subject to N6-acetyllysine. The S-adenosyl-L-methionine site is built by leucine 69, glutamate 90, and arginine 152.

This sequence belongs to the class I-like SAM-binding methyltransferase superfamily. TPMT family. As to quaternary structure, monomer.

It is found in the cytoplasm. It carries out the reaction S-adenosyl-L-methionine + a thiopurine = S-adenosyl-L-homocysteine + a thiopurine S-methylether.. This is Thiopurine S-methyltransferase (TPMT) from Lycaon pictus (African wild dog).